Reading from the N-terminus, the 221-residue chain is MVTELRVFYLVPLLLASYVQTTPRPEKMKMDCYKDVKGTIYDYEALSLNGKEHIPFKQYAGKHVLFVNVATYCGLTIQYPELNALQEDLKPFGLVILGFPCNQFGKQEPGDNLEILPGLKYVRPGKGFLPNFQLFAKGDVNGENEQKIFTFLKRSCPHPSETVVMSKHTFWEPIKVHDIRWNFEKFLVGPDGIPVMRWFHQAPVSTVKSDIMAYLSHFKTI.

Residues 1–21 form the signal peptide; that stretch reads MVTELRVFYLVPLLLASYVQT. Residue Cys-73 is part of the active site.

This sequence belongs to the glutathione peroxidase family. Epididymis.

The protein localises to the secreted. The enzyme catalyses 2 glutathione + H2O2 = glutathione disulfide + 2 H2O. Its function is as follows. Protects cells and enzymes from oxidative damage, by catalyzing the reduction of hydrogen peroxide, lipid peroxides and organic hydroperoxide, by glutathione. May constitute a glutathione peroxidase-like protective system against peroxide damage in sperm membrane lipids. In Mus musculus (Mouse), this protein is Epididymal secretory glutathione peroxidase (Gpx5).